The chain runs to 284 residues: Nucleoid occlusion protein (284 aa).

A DNA-binding region (H-T-H motif) is located at residues 143–162 (EALAQRVGKSQSAIANKMRL).

This sequence belongs to the ParB family.

Its subcellular location is the cytoplasm. It is found in the nucleoid. In terms of biological role, effects nucleoid occlusion by binding relatively nonspecifically to DNA and preventing the assembly of the division machinery in the vicinity of the nucleoid, especially under conditions that disturb the cell cycle. It helps to coordinate cell division and chromosome segregation by preventing the formation of the Z ring through the nucleoid, which would cause chromosome breakage. This is Nucleoid occlusion protein from Listeria innocua serovar 6a (strain ATCC BAA-680 / CLIP 11262).